We begin with the raw amino-acid sequence, 201 residues long: Bradykinin potentiating and C-type natriuretic peptides (201 aa).

The N-terminal stretch at 1-23 is a signal peptide; it reads MFVSRLAASGLLLLALLAVSLDG. Positions 24–47 are excised as a propeptide; it reads KPVQQWSQNWPGPKVPPLVVQQWS. Gln-48 is modified (pyrrolidone carboxylic acid). The propeptide occupies 58 to 60; that stretch reads LVV. Gln-61 carries the post-translational modification Pyrrolidone carboxylic acid. 2 consecutive propeptides follow at residues 67–95 and 107–179; these read TQLQ…AALD and GSKA…LAKK. The segment at 90-172 is disordered; that stretch reads PDAALDTPPA…GGGGGGGARR (83 aa). The span at 120 to 130 shows a compositional bias: low complexity; sequence SKGASATSTAS. Positions 132-142 are enriched in basic and acidic residues; the sequence is PMRDLRTDGKQ. Over residues 159 to 170 the composition is skewed to gly residues; that stretch reads PGGGGGGGGGGA. A disulfide bond links Cys-185 and Cys-201.

This sequence in the N-terminal section; belongs to the bradykinin-potentiating peptide family. It in the central section; belongs to the bradykinin inhibitor peptide family. The protein in the C-terminal section; belongs to the natriuretic peptide family. Venom gland.

It localises to the secreted. Its function is as follows. Inhibits the activity of the angiotensin-converting enzyme (ACE) by a preferential interaction with its C-domain. May also potentiate the hypotensive effects of bradykinin. In terms of biological role, antagonizes the vasodilatory actions of bradykinin at the B2 bradykinin receptor. Functionally, has a vasorelaxant activity in rat aortic strips and a diuretic potency in anesthetized rats. May act by activating natriuretic receptors (NPR1 and/or NPR2). The polypeptide is Bradykinin potentiating and C-type natriuretic peptides (Sistrurus catenatus edwardsii (Desert massasauga)).